The sequence spans 491 residues: MKIMSKLNDQQQFRRDKLKNLVKNGFNFPSSTFEHDNLVEINEKFSQKSKEFFLENQVKIAFAGRLIRQRGPFFIIFSQNLQFQAYISKEFQKKNEFIFANLDLGDIIEVSGYLFKTQTGQLSIKVNNFSLLTKSLHPLPDQYYGIENPDEKYRKRYLDLLVNSESAKTFRLRSKIISLIRTFFDSQGFLEVDTPVLQPVLGGASAKPFITYYNSLSQNFYLRIATELPLKKLLVAGFDRVYEIGKIFRNEGFDSTHNPEFTSIEFYQAYANLEKIMDQTENLFRFLFEKLNLDPANFDFSNKKINFLEKFARYDMIEITSKLMNFDLKSANFADLVEKAKKEGVKIEPFFKKGHLINKFFEKFVEPTLINPTFIIGHPIEISPLAKSNPNNPNFTLRAELFICGKEFANMFDELNDPIDQLSRFQAQIIEKNQGNQEASEIDNEFVQALEYGMPPAGGCGIGIDRLTMLLTKNESIREVILFPQLKPKKD.

Positions 400 and 407 each coordinate Mg(2+).

Belongs to the class-II aminoacyl-tRNA synthetase family. In terms of assembly, homodimer. Mg(2+) is required as a cofactor.

It is found in the cytoplasm. The enzyme catalyses tRNA(Lys) + L-lysine + ATP = L-lysyl-tRNA(Lys) + AMP + diphosphate. The chain is Lysine--tRNA ligase from Mesomycoplasma hyopneumoniae (strain J / ATCC 25934 / NCTC 10110) (Mycoplasma hyopneumoniae).